The primary structure comprises 59 residues: MHFRIRKCPNCGRYTLKEVCPVCGSETKVAHPPRFSPEDPYGEYRRRLKRELLGIGRRS.

The protein belongs to the NOP10 family.

Functionally, involved in ribosome biogenesis; more specifically in 18S rRNA pseudouridylation and in cleavage of pre-rRNA. The polypeptide is Ribosome biogenesis protein Nop10 (Thermococcus kodakarensis (strain ATCC BAA-918 / JCM 12380 / KOD1) (Pyrococcus kodakaraensis (strain KOD1))).